Reading from the N-terminus, the 285-residue chain is Kanamycin B dioxygenase (285 aa).

It belongs to the PhyH family. Fe cation is required as a cofactor.

It catalyses the reaction kanamycin B + 2-oxoglutarate + O2 = 2'-dehydrokanamycin A + succinate + NH4(+) + CO2. Its pathway is antibiotic biosynthesis; kanamycin biosynthesis. Functionally, mediates the conversion of kanamycin B into 2'-dehydrokanamycin A during the transformation of kanamycin B to kanamycin A. In Streptomyces kanamyceticus, this protein is Kanamycin B dioxygenase (kanJ).